Here is a 363-residue protein sequence, read N- to C-terminus: 3-isopropylmalate dehydrogenase (363 aa).

78 to 91 (GPKWEHLPPDQQPE) contacts NAD(+). Substrate is bound by residues Arg-99, Arg-109, Arg-138, and Asp-227. Asp-227, Asp-251, and Asp-255 together coordinate Mg(2+). Position 285 to 297 (285 to 297 (GSAPDIAGKNIAN)) interacts with NAD(+).

This sequence belongs to the isocitrate and isopropylmalate dehydrogenases family. LeuB type 1 subfamily. In terms of assembly, homodimer. It depends on Mg(2+) as a cofactor. The cofactor is Mn(2+).

Its subcellular location is the cytoplasm. It carries out the reaction (2R,3S)-3-isopropylmalate + NAD(+) = 4-methyl-2-oxopentanoate + CO2 + NADH. It participates in amino-acid biosynthesis; L-leucine biosynthesis; L-leucine from 3-methyl-2-oxobutanoate: step 3/4. Catalyzes the oxidation of 3-carboxy-2-hydroxy-4-methylpentanoate (3-isopropylmalate) to 3-carboxy-4-methyl-2-oxopentanoate. The product decarboxylates to 4-methyl-2 oxopentanoate. The chain is 3-isopropylmalate dehydrogenase from Shigella sonnei (strain Ss046).